The primary structure comprises 328 residues: Pancreas transcription factor 1 subunit alpha (328 aa).

A bHLH domain is found at 163 to 215 (QLRQAANVRERRRMQSINDAFEGLRSHIPTLPYEKRLSKVDTLRLAIGYINFL). Disordered regions lie at residues 259–278 (RGTRSPSPSDPDYGLPPLAG) and 305–328 (DPRKLNSKSSFNNIENEPPFEFVS).

As to quaternary structure, component of the pancreas transcription factor 1 complex (PTF1) which is composed of TCF3/p75, TCF12/p64 and PTF1A/p48. TCF3 is responsible for the nuclear import of the p48/p64 complex. Interacts with TCF3 and RBPSUH/RBP-Jkappa. Pancreas-specific (at protein level). Loss of expression is seen in ductal type pancreas cancers.

The protein resides in the nucleus. Its subcellular location is the cytoplasm. Functionally, transcription factor implicated in the cell fate determination in various organs. Binds to the E-box consensus sequence 5'-CANNTG-3'. Plays a role in early and late pancreas development and differentiation. Important for determining whether cells allocated to the pancreatic buds continue towards pancreatic organogenesis or revert back to duodenal fates. May be involved in the maintenance of exocrine pancreas-specific gene expression including ELA1 and amylase. Required for the formation of pancreatic acinar and ductal cells. Plays an important role in cerebellar development. Directly regulated by FOXN4 and RORC during retinal development, FOXN4-PTF1A pathway plays a central role in directing the differentiation of retinal progenitors towards horizontal and amacrine fates. This Homo sapiens (Human) protein is Pancreas transcription factor 1 subunit alpha (PTF1A).